Here is a 157-residue protein sequence, read N- to C-terminus: Transcription elongation factor GreA (157 aa).

Belongs to the GreA/GreB family.

Necessary for efficient RNA polymerase transcription elongation past template-encoded arresting sites. The arresting sites in DNA have the property of trapping a certain fraction of elongating RNA polymerases that pass through, resulting in locked ternary complexes. Cleavage of the nascent transcript by cleavage factors such as GreA or GreB allows the resumption of elongation from the new 3'terminus. GreA releases sequences of 2 to 3 nucleotides. The polypeptide is Transcription elongation factor GreA (Chelativorans sp. (strain BNC1)).